Reading from the N-terminus, the 1161-residue chain is PAN2-PAN3 deadenylation complex catalytic subunit pan2 (1161 aa).

WD repeat units follow at residues 20–59 (GLPTIATTIAFDDVSELLWAGNEFGRITSFYGPELQRYTS), 102–145 (AHEE…DKLQ), and 276–315 (ANVSFMLGIDISPSGEALAINDAECAIHLWGSPSKVHFNE). The tract at residues 316–452 (MSKEVEFADV…GAKLNGEAED (137 aa)) is linker. Residues 453–822 (DPLLKYSNVE…IPCVLAYQAR (370 aa)) enclose the USP domain. The 179-residue stretch at 871–1049 (VALDTEFVDL…VEDARMALRL (179 aa)) folds into the Exonuclease domain. Residues aspartate 874, glutamate 876, aspartate 983, and aspartate 1042 each contribute to the a divalent metal cation site. Residues 1094–1161 (GTAVTMQNNS…GDFFGGSPLK (68 aa)) are disordered. Over residues 1097-1110 (VTMQNNSGRNTPST) the composition is skewed to polar residues. Positions 1116-1129 (AAAAAATTSAPATP) are enriched in low complexity. The span at 1145 to 1155 (TFGGPGTGDFF) shows a compositional bias: gly residues.

The protein belongs to the peptidase C19 family. PAN2 subfamily. In terms of assembly, forms a heterotrimer with an asymmetric homodimer of the regulatory subunit pan3 to form the poly(A)-nuclease (PAN) deadenylation complex. A divalent metal cation is required as a cofactor.

It is found in the cytoplasm. It catalyses the reaction Exonucleolytic cleavage of poly(A) to 5'-AMP.. With respect to regulation, positively regulated by the regulatory subunit pan3. Catalytic subunit of the poly(A)-nuclease (PAN) deadenylation complex, one of two cytoplasmic mRNA deadenylases involved in mRNA turnover. PAN specifically shortens poly(A) tails of RNA and the activity is stimulated by poly(A)-binding protein pab1. PAN deadenylation is followed by rapid degradation of the shortened mRNA tails by the CCR4-NOT complex. Deadenylated mRNAs are then degraded by two alternative mechanisms, namely exosome-mediated 3'-5' exonucleolytic degradation, or deadenylation-dependent mRNA decaping and subsequent 5'-3' exonucleolytic degradation by xrn1. May also be involved in post-transcriptional maturation of mRNA poly(A) tails. This Aspergillus clavatus (strain ATCC 1007 / CBS 513.65 / DSM 816 / NCTC 3887 / NRRL 1 / QM 1276 / 107) protein is PAN2-PAN3 deadenylation complex catalytic subunit pan2.